Here is a 629-residue protein sequence, read N- to C-terminus: Carboxypeptidase Y homolog ARB_06361 (629 aa).

An N-terminal signal peptide occupies residues 1–18 (MLITWLLDVLLLAPPVAA). Residues asparagine 157 and asparagine 197 are each glycosylated (N-linked (GlcNAc...) asparagine). Serine 235 is a catalytic residue. Cysteine 326 and cysteine 355 form a disulfide bridge. N-linked (GlcNAc...) asparagine glycans are attached at residues asparagine 405 and asparagine 418. Aspartate 453 is a catalytic residue. Cysteine 456 contributes to the substrate binding site. Residues asparagine 463 and asparagine 554 are each glycosylated (N-linked (GlcNAc...) asparagine).

This sequence belongs to the peptidase S10 family.

The protein resides in the secreted. It catalyses the reaction Release of a C-terminal amino acid with broad specificity.. Functionally, involved in degradation of small peptides. The sequence is that of Carboxypeptidase Y homolog ARB_06361 from Arthroderma benhamiae (strain ATCC MYA-4681 / CBS 112371) (Trichophyton mentagrophytes).